We begin with the raw amino-acid sequence, 397 residues long: Acetate kinase (397 aa).

Position 7 (asparagine 7) interacts with Mg(2+). Position 14 (lysine 14) interacts with ATP. Residue arginine 90 coordinates substrate. Aspartate 147 serves as the catalytic Proton donor/acceptor. ATP-binding positions include histidine 207 to glycine 211, aspartate 282 to arginine 284, and glycine 330 to asparagine 334. Glutamate 383 contacts Mg(2+).

Belongs to the acetokinase family. In terms of assembly, homodimer. Requires Mg(2+) as cofactor. Mn(2+) serves as cofactor.

The protein localises to the cytoplasm. The enzyme catalyses acetate + ATP = acetyl phosphate + ADP. Its pathway is metabolic intermediate biosynthesis; acetyl-CoA biosynthesis; acetyl-CoA from acetate: step 1/2. Catalyzes the formation of acetyl phosphate from acetate and ATP. Can also catalyze the reverse reaction. This chain is Acetate kinase, found in Clostridium botulinum (strain 657 / Type Ba4).